The sequence spans 448 residues: Glucose-6-phosphate isomerase (448 aa).

Catalysis depends on Glu290, which acts as the Proton donor. Residues His311 and Lys425 contribute to the active site.

It belongs to the GPI family.

It is found in the cytoplasm. The enzyme catalyses alpha-D-glucose 6-phosphate = beta-D-fructose 6-phosphate. Its pathway is carbohydrate biosynthesis; gluconeogenesis. It participates in carbohydrate degradation; glycolysis; D-glyceraldehyde 3-phosphate and glycerone phosphate from D-glucose: step 2/4. Catalyzes the reversible isomerization of glucose-6-phosphate to fructose-6-phosphate. In Oceanobacillus iheyensis (strain DSM 14371 / CIP 107618 / JCM 11309 / KCTC 3954 / HTE831), this protein is Glucose-6-phosphate isomerase.